A 460-amino-acid polypeptide reads, in one-letter code: Endoglucanase C (460 aa).

An N-terminal signal peptide occupies residues 1–32 (MIKGSSLKRFKSLVMAAIFSVSIISTAIASSA). Catalysis depends on Glu-99, which acts as the Proton donor. The active-site Nucleophile is the Asp-155. The 61-residue stretch at 400–460 (KPDLKGDVNN…FAQLKVKLLN (61 aa)) folds into the Dockerin domain.

The protein belongs to the glycosyl hydrolase 8 (cellulase D) family. Monomer. In terms of processing, there are two forms of the cellulase. The shorter form lacks probably the C-terminal reiterated domains.

It catalyses the reaction Endohydrolysis of (1-&gt;4)-beta-D-glucosidic linkages in cellulose, lichenin and cereal beta-D-glucans.. The protein operates within glycan metabolism; cellulose degradation. The biological conversion of cellulose to glucose generally requires three types of hydrolytic enzymes: (1) Endoglucanases which cut internal beta-1,4-glucosidic bonds; (2) Exocellobiohydrolases that cut the disaccharide cellobiose from the non-reducing end of the cellulose polymer chain; (3) Beta-1,4-glucosidases which hydrolyze the cellobiose and other short cello-oligosaccharides to glucose. The protein is Endoglucanase C (celCCC) of Ruminiclostridium cellulolyticum (strain ATCC 35319 / DSM 5812 / JCM 6584 / H10) (Clostridium cellulolyticum).